We begin with the raw amino-acid sequence, 79 residues long: Conotoxin VnMEKL-024 (79 aa).

The signal sequence occupies residues 1–19 (MQKLTILLLVAAVLMSTQA). Residues 20–50 (LIRGGVEKRQEAKRNFFSKRKTTAESWWEGE) constitute a propeptide that is removed on maturation. Cystine bridges form between C51–C65, C58–C69, and C64–C76.

The protein belongs to the conotoxin O2 superfamily. Expressed by the venom duct.

It is found in the secreted. The sequence is that of Conotoxin VnMEKL-024 from Conus ventricosus (Mediterranean cone).